Here is a 175-residue protein sequence, read N- to C-terminus: Pathogenesis-related protein 1A1 (175 aa).

An N-terminal signal peptide occupies residues 1-21 (MKSSIFVACFITFIIFHSSQA). The SCP domain occupies 29 to 146 (LNAHNAARRR…SGWVFITCNY (118 aa)). 3 disulfides stabilise this stretch: Cys-65–Cys-135, Cys-108–Cys-114, and Cys-130–Cys-144.

It belongs to the CRISP family.

In terms of biological role, probably involved in the defense reaction of plants against pathogens. The polypeptide is Pathogenesis-related protein 1A1 (Solanum lycopersicum (Tomato)).